The chain runs to 1735 residues: Glutamine and serine-rich protein 1 (1735 aa).

Met-1 is modified (N-acetylmethionine). A compositionally biased stretch (polar residues) spans 267–297; it reads AIPSSGYPPSTTKIKSCSTEQPLTSTKTPKP. Disordered regions lie at residues 267-301, 414-440, 479-518, and 533-561; these read AIPS…QSII, TRDL…VSQT, SRAQ…FLPA, and LQNN…SKQE. Residues 417-440 show a composition bias toward low complexity; the sequence is LSSVSQSQSYSSGHSQGLSPVSQT. 3 positions are modified to phosphoserine: Ser-586, Ser-615, and Ser-886. The residue at position 949 (Thr-949) is a Phosphothreonine. Residues 964–1033 are disordered; the sequence is GPSHEVQEQS…EFTLGGDDSG (70 aa). Polar residues predominate over residues 971–985; the sequence is EQSSGPFKKQSATNL. Phosphoserine is present on Ser-987. Residues 997–1024 show a composition bias toward polar residues; that stretch reads STLNNNRNQEFVSSSRSISGENATSESE. Residues Lys-1058 and Lys-1083 each participate in a glycyl lysine isopeptide (Lys-Gly) (interchain with G-Cter in SUMO2) cross-link. Disordered stretches follow at residues 1073 to 1132 and 1178 to 1217; these read KKRA…EKMR and RPGT…DKVD. Over residues 1120–1132 the composition is skewed to basic and acidic residues; sequence SCHDGYQHQEKMR. 4 positions are modified to phosphoserine: Ser-1211, Ser-1230, Ser-1231, and Ser-1239. The interval 1256-1286 is disordered; sequence TSDKKKKTEALQVATTSPTANTTGTATTSST. The segment covering 1269 to 1286 has biased composition (low complexity); it reads ATTSPTANTTGTATTSST. Position 1341 is a phosphothreonine (Thr-1341). Phosphoserine is present on Ser-1348. A disordered region spans residues 1441-1532; the sequence is VCSKKPRNKP…SSDDEEFEPP (92 aa). Residues 1449–1478 are compositionally biased toward polar residues; it reads KPSQTIRTVQAKPSSSSKTSDPLASKTTTT. The span at 1492 to 1508 shows a compositional bias: basic and acidic residues; the sequence is VKAEPPPKKRKKWKEEF.

In terms of assembly, interacts with TET1.

It is found in the chromosome. In terms of biological role, plays an essential role in the protection and maintenance of transcriptional and developmental programs. Protects many bivalent promoters and poised enhancers from hypermethylation, showing a marked preference for these regulatory elements over other types of promoters or enhancers. Mechanistically, cooperates with TET1 and binds to DNA in a common complex to inhibit the binding of DNMT3A/3B and therefore de novo methylation. In Homo sapiens (Human), this protein is Glutamine and serine-rich protein 1 (QSER1).